The primary structure comprises 338 residues: Fructose-1,6-bisphosphatase class 1 (338 aa).

The Mg(2+) site is built by glutamate 92, aspartate 114, leucine 116, and aspartate 117. Substrate is bound by residues 117-120 and asparagine 210; that span reads DGSS. Glutamate 284 serves as a coordination point for Mg(2+).

It belongs to the FBPase class 1 family. As to quaternary structure, homotetramer. The cofactor is Mg(2+).

The protein localises to the cytoplasm. The catalysed reaction is beta-D-fructose 1,6-bisphosphate + H2O = beta-D-fructose 6-phosphate + phosphate. Its pathway is carbohydrate biosynthesis; gluconeogenesis. In Halorhodospira halophila (strain DSM 244 / SL1) (Ectothiorhodospira halophila (strain DSM 244 / SL1)), this protein is Fructose-1,6-bisphosphatase class 1.